The primary structure comprises 256 residues: E3 ubiquitin-protein ligase MIR2 (256 aa).

Over 1–83 (MASKDVEEGV…NLWPEMERQE (83 aa)) the chain is Cytoplasmic. An RING-CH-type zinc finger spans residues 7–66 (EEGVEGPICWICREEVGNEGIHPCACTGELDVVHPQCLSTWLTVSRNTACQMCRVIYRTR). Zn(2+) is bound by residues Cys15, Cys18, Cys30, Cys32, His40, Cys43, Cys56, and Cys59. A helical transmembrane segment spans residues 84–104 (IFELFLLMSVVVAGLVGVALC). Residues 105 to 124 (TWTLLVILTAPAGTFSPGAV) are Extracellular-facing. Residues 125–145 (LGFLCFFGFYQIFIVFAFGGI) traverse the membrane as a helical segment. Topologically, residues 146–256 (CRVSGTVRAL…VRKNHPKNNG (111 aa)) are cytoplasmic. The disordered stretch occupies residues 179–256 (DNIELTVLVG…VRKNHPKNNG (78 aa)). Over residues 193–203 (TDEEPTDESSE) the composition is skewed to acidic residues. A compositionally biased stretch (basic residues) spans 245–256 (KPVRKNHPKNNG).

Binds human MHC-I, CD86, ICAM1 and CD1D.

The protein resides in the host cell membrane. It localises to the host endoplasmic reticulum. It carries out the reaction S-ubiquitinyl-[E2 ubiquitin-conjugating enzyme]-L-cysteine + [acceptor protein]-L-lysine = [E2 ubiquitin-conjugating enzyme]-L-cysteine + N(6)-ubiquitinyl-[acceptor protein]-L-lysine.. Its pathway is protein modification; protein ubiquitination. Membrane-bound E3 ubiquitin ligase expressed at the immediate early stage of viral reactivation to mediate polyubiquitination of various host membrane proteins related to the immune response. Promotes ubiquitination and subsequent degradation of host MHC-I, CD86, DC-SIGN and DC-SIGNR, ICAM1 and CD1D molecules, presumably to prevent lysis of infected cells by cytotoxic T-lymphocytes and NK cell. Plays a role in the down-regulation of the host stress-induced NKG2D ligands MICA, MICB and CLEC2B, which enable immune cells expressing the NKG2D receptor to recognize and annihilate infected cells prior to viral spread. Alters monocyte metabolism and proliferation by mediating rapid internalization of cellular growth factor-binding receptor tyrosine kinases from the surface leading to increased signaling. This Homo sapiens (Human) protein is E3 ubiquitin-protein ligase MIR2 (K5).